We begin with the raw amino-acid sequence, 226 residues long: EEF1A lysine methyltransferase 3 (226 aa).

S-adenosyl-L-methionine-binding positions include tryptophan 57, glycine 83–glycine 85, aspartate 104, tryptophan 133, and alanine 150.

This sequence belongs to the methyltransferase superfamily. METTL21 family. As to quaternary structure, interacts with members of the heat shock protein 70 and 90 families and of the TCP-1 chaperonin family, as well as with HSPD1, STIP1 and tubulin; at least some of these proteins may be methylation substrates.

Its subcellular location is the cytoplasm. The protein localises to the cytoskeleton. It is found in the microtubule organizing center. It localises to the centrosome. The catalysed reaction is L-lysyl-[protein] + 3 S-adenosyl-L-methionine = N(6),N(6),N(6)-trimethyl-L-lysyl-[protein] + 3 S-adenosyl-L-homocysteine + 3 H(+). It carries out the reaction L-lysyl-[protein] + S-adenosyl-L-methionine = N(6)-methyl-L-lysyl-[protein] + S-adenosyl-L-homocysteine + H(+). It catalyses the reaction N(6)-methyl-L-lysyl-[protein] + S-adenosyl-L-methionine = N(6),N(6)-dimethyl-L-lysyl-[protein] + S-adenosyl-L-homocysteine + H(+). The enzyme catalyses N(6),N(6)-dimethyl-L-lysyl-[protein] + S-adenosyl-L-methionine = N(6),N(6),N(6)-trimethyl-L-lysyl-[protein] + S-adenosyl-L-homocysteine + H(+). Protein-lysine methyltransferase that selectively mono-, di- and trimethylates 'Lys-165' of the translation elongation factors EEF1A1 and EEF1A2 in an aminoacyl-tRNA and GTP-dependent manner. EEF1A1 methylation by EEF1AKMT3 is dynamic as well as inducible by stress conditions, such as ER-stress, and plays a regulatory role on mRNA translation. The sequence is that of EEF1A lysine methyltransferase 3 from Homo sapiens (Human).